Here is a 275-residue protein sequence, read N- to C-terminus: Large ribosomal subunit protein uL2 (275 aa).

A compositionally biased stretch (polar residues) spans 38–53; it reads NSKAGRNNNGRITTRH. 2 disordered regions span residues 38 to 59 and 224 to 257; these read NSKAGRNNNGRITTRHQGGGHK and AMNPIDHPHGGGEGRTAAGRDPVSPWGTPTKGFR.

Belongs to the universal ribosomal protein uL2 family. As to quaternary structure, part of the 50S ribosomal subunit. Forms a bridge to the 30S subunit in the 70S ribosome.

One of the primary rRNA binding proteins. Required for association of the 30S and 50S subunits to form the 70S ribosome, for tRNA binding and peptide bond formation. It has been suggested to have peptidyltransferase activity; this is somewhat controversial. Makes several contacts with the 16S rRNA in the 70S ribosome. This is Large ribosomal subunit protein uL2 from Burkholderia thailandensis (strain ATCC 700388 / DSM 13276 / CCUG 48851 / CIP 106301 / E264).